The following is a 176-amino-acid chain: ATP-dependent protease subunit HslV (176 aa).

The active site involves Thr-2. Gly-157, Cys-160, and Thr-163 together coordinate Na(+).

Belongs to the peptidase T1B family. HslV subfamily. As to quaternary structure, a double ring-shaped homohexamer of HslV is capped on each side by a ring-shaped HslU homohexamer. The assembly of the HslU/HslV complex is dependent on binding of ATP.

The protein resides in the cytoplasm. The enzyme catalyses ATP-dependent cleavage of peptide bonds with broad specificity.. Allosterically activated by HslU binding. In terms of biological role, protease subunit of a proteasome-like degradation complex believed to be a general protein degrading machinery. This is ATP-dependent protease subunit HslV from Pectobacterium atrosepticum (strain SCRI 1043 / ATCC BAA-672) (Erwinia carotovora subsp. atroseptica).